A 429-amino-acid chain; its full sequence is UDP-N-acetylglucosamine 1-carboxyvinyltransferase (429 aa).

Phosphoenolpyruvate is bound at residue 22-23 (KN). Arg-102 serves as a coordination point for UDP-N-acetyl-alpha-D-glucosamine. The active-site Proton donor is Cys-126. Cys-126 is modified (2-(S-cysteinyl)pyruvic acid O-phosphothioketal). Residues 131-135 (RPVDL), Asp-316, and Ile-338 contribute to the UDP-N-acetyl-alpha-D-glucosamine site.

The protein belongs to the EPSP synthase family. MurA subfamily.

Its subcellular location is the cytoplasm. It catalyses the reaction phosphoenolpyruvate + UDP-N-acetyl-alpha-D-glucosamine = UDP-N-acetyl-3-O-(1-carboxyvinyl)-alpha-D-glucosamine + phosphate. It functions in the pathway cell wall biogenesis; peptidoglycan biosynthesis. In terms of biological role, cell wall formation. Adds enolpyruvyl to UDP-N-acetylglucosamine. This is UDP-N-acetylglucosamine 1-carboxyvinyltransferase from Methylorubrum extorquens (strain CM4 / NCIMB 13688) (Methylobacterium extorquens).